The primary structure comprises 114 residues: MHEMSLAEGIRGIVEDVARENGATRVARVVLEIGELASVEVEALRFCLDVVLKDSVADGAAVDIEAVPGSGWCMQCATVVPIAQRYDACPQCGGYQVQPTGGTEMRVKELALGD.

Ni(2+) is bound at residue His2. Zn(2+) contacts are provided by Cys73, Cys76, Cys89, and Cys92.

It belongs to the HypA/HybF family.

In terms of biological role, involved in the maturation of [NiFe] hydrogenases. Required for nickel insertion into the metal center of the hydrogenase. This chain is Hydrogenase maturation factor HypA, found in Azoarcus sp. (strain BH72).